The primary structure comprises 377 residues: Probable tRNA pseudouridine synthase D (377 aa).

The active-site Nucleophile is the aspartate 89. The TRUD domain occupies 160 to 377; that stretch reads YLPAFIGYQR…ILRGDPRKFT (218 aa).

This sequence belongs to the pseudouridine synthase TruD family.

The catalysed reaction is uridine(13) in tRNA = pseudouridine(13) in tRNA. Functionally, could be responsible for synthesis of pseudouridine from uracil-13 in transfer RNAs. In Saccharolobus solfataricus (strain ATCC 35092 / DSM 1617 / JCM 11322 / P2) (Sulfolobus solfataricus), this protein is Probable tRNA pseudouridine synthase D.